The following is a 231-amino-acid chain: Orotidine 5'-phosphate decarboxylase (231 aa).

Residues Asp-11, Lys-32, 59–68 (DLKFHDIPNT), Thr-118, Arg-180, Gln-189, Gly-209, and Arg-210 each bind substrate. Residue Lys-61 is the Proton donor of the active site.

It belongs to the OMP decarboxylase family. Type 1 subfamily. Homodimer.

The catalysed reaction is orotidine 5'-phosphate + H(+) = UMP + CO2. It functions in the pathway pyrimidine metabolism; UMP biosynthesis via de novo pathway; UMP from orotate: step 2/2. In terms of biological role, catalyzes the decarboxylation of orotidine 5'-monophosphate (OMP) to uridine 5'-monophosphate (UMP). This is Orotidine 5'-phosphate decarboxylase from Synechocystis sp. (strain ATCC 27184 / PCC 6803 / Kazusa).